A 440-amino-acid polypeptide reads, in one-letter code: Glycerol-3-phosphate dehydrogenase [NAD(+)], chloroplastic (440 aa).

The N-terminal 47 residues, 1 to 47 (MAAAAAATFLPHTPTPRRRLAVAVHSPTRRRLSLVFSGPPDGALSVA), are a transit peptide targeting the chloroplast. Residues 57–76 (EEAAAAVSAPRGGGGGGGKE) are disordered. Residues 114-119 (GGGSFG), Phe191, Lys214, and Ala248 each bind NAD(+). Position 214 (Lys214) interacts with substrate. Lys299 acts as the Proton acceptor in catalysis. Residues Arg363 and Glu389 each coordinate NAD(+). A substrate-binding site is contributed by 363 to 364 (RN).

It belongs to the NAD-dependent glycerol-3-phosphate dehydrogenase family.

The protein resides in the plastid. It is found in the chloroplast. The catalysed reaction is sn-glycerol 3-phosphate + NAD(+) = dihydroxyacetone phosphate + NADH + H(+). The protein operates within membrane lipid metabolism; glycerophospholipid metabolism. Functionally, required to supply glycerol-3-phosphate in the chloroplast for the synthesis of glycerolipids. The polypeptide is Glycerol-3-phosphate dehydrogenase [NAD(+)], chloroplastic (Oryza sativa subsp. japonica (Rice)).